The primary structure comprises 479 residues: F-box protein SKIP17 (479 aa).

One can recognise an F-box domain in the interval 92-138; sequence NSNSWSLPPELTIKVFSMLDTKSMMQAAVCCTMFNKCAMDRLCYSHI. The tract at residues 435–479 is disordered; it reads EMMEAEDDEVDEEDDSDDDTDDVSDEDESENDDDMGMGFDVDYLL. Acidic residues predominate over residues 437–469; the sequence is MEAEDDEVDEEDDSDDDTDDVSDEDESENDDDM.

In terms of assembly, part of a SCF (ASK-cullin-F-box) protein ligase complex. Interacts with SPK1B/ASK2.

Its subcellular location is the nucleus. It functions in the pathway protein modification; protein ubiquitination. Functionally, component of SCF(ASK-cullin-F-box) E3 ubiquitin ligase complexes, which may mediate the ubiquitination and subsequent proteasomal degradation of target proteins. In Arabidopsis thaliana (Mouse-ear cress), this protein is F-box protein SKIP17 (SKIP17).